Here is a 494-residue protein sequence, read N- to C-terminus: Amidophosphoribosyltransferase (494 aa).

The propeptide occupies 1–10; sequence MFNYSGLNEE. Catalysis depends on Cys11, which acts as the Nucleophile. Residues 11–231 enclose the Glutamine amidotransferase type-2 domain; that stretch reads CGVFGIWNHP…AGEYVVINDK (221 aa). The Mg(2+) site is built by Ser294, Asp356, and Asp357.

This sequence in the C-terminal section; belongs to the purine/pyrimidine phosphoribosyltransferase family. It depends on Mg(2+) as a cofactor.

The enzyme catalyses 5-phospho-beta-D-ribosylamine + L-glutamate + diphosphate = 5-phospho-alpha-D-ribose 1-diphosphate + L-glutamine + H2O. It participates in purine metabolism; IMP biosynthesis via de novo pathway; N(1)-(5-phospho-D-ribosyl)glycinamide from 5-phospho-alpha-D-ribose 1-diphosphate: step 1/2. Functionally, catalyzes the formation of phosphoribosylamine from phosphoribosylpyrophosphate (PRPP) and glutamine. In Staphylococcus aureus (strain Mu50 / ATCC 700699), this protein is Amidophosphoribosyltransferase.